The primary structure comprises 544 residues: MSRQSLTKAHAKITELSWDPTFATPATRFGTDYTFEKAPKKDPLKQIMRSYFPMEEEKDNRVYGAMDGAIRGNMFRQVQQRWLEWQKLFLSIIPFPEISAARAMPMAIDAVPNPEIHNGLAVQMIDEVRHSTIQMNLKKLYMNNYIDPAGFDMTEKAFANNYAGTIGRQFGEGFITGDAITAANIYLTVVAETAFTNTLFVAMPDEAAANGDYLLPTVFHSVQSDESRHISNGYSILLMALADERNRPLLERDLRYAWWNNHCVVDAAIGTFIEYGTKDRRKDRESYAEMWRRWIYDDYYRSYLIPLEKYGLTIPHDLVEEAWKRITDKGYVHEVARFFATGWPVNYWRIDAMTDKDFEWFEHKYPGWYSKYGKWWEEYNRLAYPGRNKPIAFEEVGYQYPHRCWTCMVPALIREDMVVEKVDDQWRTYCSETCYWTDAVAFRSEYQGRPTPNMGRLTGFREWETLHHGKDLADIVSDLGYVRDDGKTLVGQPHLDLDDPKKMWTLDDVRGNTFQSPNVLLNEMSDAERNAHIAAYRAGGAVPA.

Residues glutamate 97, glutamate 127, histidine 130, glutamate 192, glutamate 226, and histidine 229 each contribute to the Fe cation site.

It belongs to the TmoA/XamoA family. As to quaternary structure, the propane 2-monooxygenase multicomponent enzyme system is composed of an electron transfer component and a monooxygenase component interacting with the effector protein PrmD. The electron transfer component is composed of a reductase (PrmB), and the monooxygenase component is formed by a large subunit (PrmA) and a small subunit (PrmC). Probably requires the presence of the chaperonin-like protein PrmG to ensure a productive folding, resulting of a soluble PrmA, which leads to the active form of PrmABCD. Fe(2+) is required as a cofactor.

The catalysed reaction is propane + NADH + O2 + H(+) = propan-2-ol + NAD(+) + H2O. In terms of biological role, component of the propane 2-monooxygenase multicomponent enzyme system which is involved in the degradation of propane via the O2-dependent hydroxylation of propane. Also able to catalyze the oxidation the water contaminant N-nitrosodimethylamine (NDMA). The chain is Propane 2-monooxygenase, hydroxylase component large subunit from Rhodococcus jostii (strain RHA1).